A 260-amino-acid polypeptide reads, in one-letter code: Thaumatin-like protein 1 (260 aa).

Residues methionine 1 to glycine 32 form the signal peptide. Disulfide bonds link cysteine 41/cysteine 255, cysteine 89/cysteine 100, cysteine 105/cysteine 112, cysteine 166/cysteine 245, cysteine 171/cysteine 228, cysteine 179/cysteine 191, cysteine 195/cysteine 204, and cysteine 205/cysteine 215.

Belongs to the thaumatin family. In terms of tissue distribution, expressed only in roots.

Functionally, involved in local responses of roots to colonization by non-pathogenic plant growth-promoting rhizobacteria (PGPR) fluorescent Pseudomonas spp., but seems to not being required for the establishment of subsequent induced systemic resistance (ISR). The chain is Thaumatin-like protein 1 from Arabidopsis thaliana (Mouse-ear cress).